A 108-amino-acid chain; its full sequence is Peptidyl-prolyl cis-trans isomerase FKBP1B (108 aa).

Residues 20–108 enclose the PPIase FKBP-type domain; the sequence is GQTCVVHYTG…IFDVELLNLE (89 aa).

As to quaternary structure, identified in a complex composed of RYR2, FKBP1B, PKA catalytic subunit, PRKAR2A, AKAP6, and the protein phosphatases PP2A and PP1. Interacts directly with RYR2.

The protein localises to the cytoplasm. It is found in the sarcoplasmic reticulum. It carries out the reaction [protein]-peptidylproline (omega=180) = [protein]-peptidylproline (omega=0). Inhibited by both FK506 and rapamycin. In terms of biological role, has the potential to contribute to the immunosuppressive and toxic effects of FK506 and rapamycin. PPIases accelerate the folding of proteins. It catalyzes the cis-trans isomerization of proline imidic peptide bonds in oligopeptides. This chain is Peptidyl-prolyl cis-trans isomerase FKBP1B (FKBP1B), found in Bos taurus (Bovine).